Reading from the N-terminus, the 212-residue chain is Cytidylate kinase (212 aa).

7-15 (GPAASGKGT) is a binding site for ATP.

The protein belongs to the cytidylate kinase family. Type 1 subfamily.

It is found in the cytoplasm. It catalyses the reaction CMP + ATP = CDP + ADP. The catalysed reaction is dCMP + ATP = dCDP + ADP. This Bradyrhizobium diazoefficiens (strain JCM 10833 / BCRC 13528 / IAM 13628 / NBRC 14792 / USDA 110) protein is Cytidylate kinase.